The following is a 126-amino-acid chain: MASYNRTRRIAEEIRKVVSTMLINGVKDPRITSMVSVTDVEVTNDLRYAYVYVSILGGDEESTLTGLKSAGGYIRREVGKNIKLRYIPEIVFKLDDSIEKGMYMDSLIKRVNEKNAQQNEDENYDE.

The protein belongs to the RbfA family. As to quaternary structure, monomer. Binds 30S ribosomal subunits, but not 50S ribosomal subunits or 70S ribosomes.

Its subcellular location is the cytoplasm. Its function is as follows. One of several proteins that assist in the late maturation steps of the functional core of the 30S ribosomal subunit. Associates with free 30S ribosomal subunits (but not with 30S subunits that are part of 70S ribosomes or polysomes). Required for efficient processing of 16S rRNA. May interact with the 5'-terminal helix region of 16S rRNA. The sequence is that of Ribosome-binding factor A from Clostridioides difficile (strain 630) (Peptoclostridium difficile).